We begin with the raw amino-acid sequence, 517 residues long: Xaa-Pro dipeptidase (517 aa).

Positions 244, 255, 336, 381, and 420 each coordinate Mn(2+).

The protein belongs to the peptidase M24B family. Bacterial-type prolidase subfamily. In terms of assembly, monomer. The cofactor is Mn(2+).

The catalysed reaction is Xaa-L-Pro dipeptide + H2O = an L-alpha-amino acid + L-proline. It catalyses the reaction diisopropyl fluorophosphate + H2O = diisopropyl phosphate + fluoride + 2 H(+). The enzyme catalyses An aryl dialkyl phosphate + H2O = dialkyl phosphate + an aryl alcohol.. In terms of biological role, splits dipeptides with a prolyl or hydroxyprolyl residue in the C-terminal position and a nonpolar amino acid at the N-terminal position. Also catalyzes the hydrolysis of toxic organophosphorus cholinesterase-inhibiting compounds including insecticide paraoxon and nerve gases such as diisopropylfluorophosphate (DFP), O-isopropyl methylphosphonofluoridate (sarin), O-pinacolyl methylphosphonofluoridate (soman), and O-cyclohexyl methylphosphonofluoridate. The protein is Xaa-Pro dipeptidase (pepQ) of Alteromonas sp.